An 88-amino-acid chain; its full sequence is Small ribosomal subunit protein bS16c (88 aa).

The protein belongs to the bacterial ribosomal protein bS16 family.

It is found in the plastid. The protein localises to the chloroplast. This Gossypium hirsutum (Upland cotton) protein is Small ribosomal subunit protein bS16c.